A 518-amino-acid chain; its full sequence is Putative Rieske 2Fe-2S iron-sulfur protein MSMEG_6410/MSMEI_6242 (518 aa).

Lys-375 participates in a covalent cross-link: Isoglutamyl lysine isopeptide (Lys-Gln) (interchain with Q-Cter in protein Pup). Residues 431–518 form the Rieske domain; it reads LYTFFKCLTD…KGHELRCQKL (88 aa). The [2Fe-2S] cluster site is built by Cys-471, His-473, Cys-491, and His-494.

Requires [2Fe-2S] cluster as cofactor.

This Mycolicibacterium smegmatis (strain ATCC 700084 / mc(2)155) (Mycobacterium smegmatis) protein is Putative Rieske 2Fe-2S iron-sulfur protein MSMEG_6410/MSMEI_6242.